The following is a 130-amino-acid chain: Small ribosomal subunit protein uS8 (130 aa).

It belongs to the universal ribosomal protein uS8 family. As to quaternary structure, part of the 30S ribosomal subunit.

In terms of biological role, one of the primary rRNA binding proteins, it binds directly to 16S rRNA central domain where it helps coordinate assembly of the platform of the 30S subunit. This Methanococcus aeolicus (strain ATCC BAA-1280 / DSM 17508 / OCM 812 / Nankai-3) protein is Small ribosomal subunit protein uS8.